A 324-amino-acid chain; its full sequence is Dermonecrotic toxin Hl-PLD1 (324 aa).

The signal sequence occupies residues 1-35; that stretch reads MAHCYYNSKRGCNRVMKTVALVVLISTVMVEESRG. His50 is an active-site residue. Glu70 and Asp72 together coordinate Mg(2+). His86 acts as the Nucleophile in catalysis. 2 disulfides stabilise this stretch: Cys90-Cys96 and Cys92-Cys236. Asp130 contacts Mg(2+).

The protein belongs to the arthropod phospholipase D family. Class II subfamily. Mg(2+) is required as a cofactor. In terms of tissue distribution, expressed by the venom gland.

It is found in the secreted. The catalysed reaction is an N-(acyl)-sphingosylphosphocholine = an N-(acyl)-sphingosyl-1,3-cyclic phosphate + choline. The enzyme catalyses an N-(acyl)-sphingosylphosphoethanolamine = an N-(acyl)-sphingosyl-1,3-cyclic phosphate + ethanolamine. It carries out the reaction a 1-acyl-sn-glycero-3-phosphocholine = a 1-acyl-sn-glycero-2,3-cyclic phosphate + choline. It catalyses the reaction a 1-acyl-sn-glycero-3-phosphoethanolamine = a 1-acyl-sn-glycero-2,3-cyclic phosphate + ethanolamine. Its function is as follows. Dermonecrotic toxins cleave the phosphodiester linkage between the phosphate and headgroup of certain phospholipids (sphingolipid and lysolipid substrates), forming an alcohol (often choline) and a cyclic phosphate. This toxin acts on sphingomyelin (SM) with a high activity. It may also act on ceramide phosphoethanolamine (CPE), lysophosphatidylcholine (LPC) and lysophosphatidylethanolamine (LPE), but not on lysophosphatidylserine (LPS), and lysophosphatidylglycerol (LPG). It acts by transphosphatidylation, releasing exclusively cyclic phosphate products as second products. In vivo, shows dermonecrotic activity when intradermally injected into rabbit skin and is lethal to mice. Induces increased vascular permeability, edema, inflammatory response, and platelet aggregation. Does not show hemolytic activity (at up to 50 ug). In Hemiscorpius lepturus (Scorpion), this protein is Dermonecrotic toxin Hl-PLD1.